The primary structure comprises 98 residues: NADH-ubiquinone oxidoreductase chain 4L (98 aa).

Helical transmembrane passes span 1 to 21 (MSLT…GLLM), 29 to 49 (SLLC…VTIL), and 61 to 81 (IILL…LVMV).

It belongs to the complex I subunit 4L family. In terms of assembly, core subunit of respiratory chain NADH dehydrogenase (Complex I) which is composed of 45 different subunits.

It localises to the mitochondrion inner membrane. The enzyme catalyses a ubiquinone + NADH + 5 H(+)(in) = a ubiquinol + NAD(+) + 4 H(+)(out). In terms of biological role, core subunit of the mitochondrial membrane respiratory chain NADH dehydrogenase (Complex I) which catalyzes electron transfer from NADH through the respiratory chain, using ubiquinone as an electron acceptor. Part of the enzyme membrane arm which is embedded in the lipid bilayer and involved in proton translocation. In Sturnira lilium (Lesser yellow-shouldered bat), this protein is NADH-ubiquinone oxidoreductase chain 4L (MT-ND4L).